A 150-amino-acid chain; its full sequence is Molybdopterin synthase catalytic subunit (150 aa).

Substrate-binding positions include 37-39 (KVR), 103-104 (HR), lysine 119, and 126-128 (KRE). A Glycyl lysine isopeptide (Lys-Gly) (interchain with G-Cter in MoaD) cross-link involves residue lysine 119.

The protein belongs to the MoaE family. As to quaternary structure, heterotetramer of 2 MoaD subunits and 2 MoaE subunits. Also stable as homodimer. The enzyme changes between these two forms during catalysis.

It carries out the reaction 2 [molybdopterin-synthase sulfur-carrier protein]-C-terminal-Gly-aminoethanethioate + cyclic pyranopterin phosphate + H2O = molybdopterin + 2 [molybdopterin-synthase sulfur-carrier protein]-C-terminal Gly-Gly + 2 H(+). Its pathway is cofactor biosynthesis; molybdopterin biosynthesis. In terms of biological role, converts molybdopterin precursor Z to molybdopterin. This requires the incorporation of two sulfur atoms into precursor Z to generate a dithiolene group. The sulfur is provided by MoaD. The protein is Molybdopterin synthase catalytic subunit (moaE) of Escherichia coli (strain K12).